The following is a 287-amino-acid chain: Large ribosomal subunit protein uL3 (287 aa).

Residues 228 to 287 (KAPEAKPAKLSKKKQAKELAKAQAANQQTVEAKVDTPVVEPKPTEVKKAAPVVEKKGEDK) are disordered. Over residues 269–287 (KPTEVKKAAPVVEKKGEDK) the composition is skewed to basic and acidic residues.

This sequence belongs to the universal ribosomal protein uL3 family. In terms of assembly, part of the 50S ribosomal subunit. Forms a cluster with proteins L14 and L19.

In terms of biological role, one of the primary rRNA binding proteins, it binds directly near the 3'-end of the 23S rRNA, where it nucleates assembly of the 50S subunit. This is Large ribosomal subunit protein uL3 from Mycoplasma pneumoniae (strain ATCC 29342 / M129 / Subtype 1) (Mycoplasmoides pneumoniae).